Reading from the N-terminus, the 839-residue chain is Taste receptor type 1 member 2 (839 aa).

Positions 1–19 (MGTRATTICSLFFLLWVLA) are cleaved as a signal peptide. At 20–566 (EPAENSDFYL…VFLEWHEAPT (547 aa)) the chain is on the extracellular side. Residues Asn84, Asn248, Asn292, Asn312, Asn368, Asn407, Asn428, Asn487, and Asn527 are each glycosylated (N-linked (GlcNAc...) asparagine). A helical transmembrane segment spans residues 567–587 (IAVALLAALGFLSTLAILVIF). The Cytoplasmic portion of the chain corresponds to 588–602 (WRHFQTPIVRSAGGP). The helical transmembrane segment at 603–623 (MCFLMLTLLLVAYMVVPVYVG) threads the bilayer. Over 624-635 (PPKVSTCLCRQA) the chain is Extracellular. A helical membrane pass occupies residues 636-656 (LFPLCFTICISCIAVRSFQIV). At 657–681 (CAFKMASRFPRAYSYWVRYQGPYVS) the chain is on the cytoplasmic side. The helical transmembrane segment at 682–702 (MAFITVLKMVIVVIGMLATGL) threads the bilayer. Residues 703–727 (SPTTRTDPDDPKITIVSCNPNYRNS) are Extracellular-facing. Residues 728–748 (LLFNTSLDLLLSVVGFSFAYM) traverse the membrane as a helical segment. Over 749–760 (GKELPTNYNEAK) the chain is Cytoplasmic. Residues 761–781 (FITLSMTFYFTSSVSLCTFMS) traverse the membrane as a helical segment. Over 782-784 (AYS) the chain is Extracellular. Residues 785–805 (GVLVTIVDLLVTVLNLLAISL) form a helical membrane-spanning segment. The Cytoplasmic portion of the chain corresponds to 806-839 (GYFGPKCYMILFYPERNTPAYFNSMIQGYTMRRD).

It belongs to the G-protein coupled receptor 3 family. TAS1R subfamily. As to quaternary structure, forms heterodimers with TAS1R3.

The protein localises to the cell membrane. Putative taste receptor. TAS1R2/TAS1R3 recognizes diverse natural and synthetic sweeteners. In Gorilla gorilla gorilla (Western lowland gorilla), this protein is Taste receptor type 1 member 2 (TAS1R2).